The sequence spans 164 residues: Large ribosomal subunit protein uL10 (164 aa).

Belongs to the universal ribosomal protein uL10 family. Part of the ribosomal stalk of the 50S ribosomal subunit. The N-terminus interacts with L11 and the large rRNA to form the base of the stalk. The C-terminus forms an elongated spine to which L12 dimers bind in a sequential fashion forming a multimeric L10(L12)X complex.

Forms part of the ribosomal stalk, playing a central role in the interaction of the ribosome with GTP-bound translation factors. This is Large ribosomal subunit protein uL10 from Aliivibrio salmonicida (strain LFI1238) (Vibrio salmonicida (strain LFI1238)).